Reading from the N-terminus, the 223-residue chain is MRTLTVHYLGQIAYTAAWDIQRQLAAERSRGQIGDTLLLLEHPPTITLGNKARPDHVLASPAELAARGVAVVQSDRGGEVTYHAPGQLVAYPIFKLSQHGSDVGRYVRGLEESVIRVLAGYGLVGERVAGLTGVWVRNGAAKICAIGVKLSASGVTTHGLALNVDPDLSGFDLIVPCGITDRSVTSLAFELGQAPALAEVAERLIAQIGEVFALEPRVEALAM.

Residues Gly31–Pro216 enclose the BPL/LPL catalytic domain. Residues Arg76–His83, Ala145–Gly147, and Gly159–Ala161 contribute to the substrate site. Cys177 (acyl-thioester intermediate) is an active-site residue.

It belongs to the LipB family.

Its subcellular location is the cytoplasm. It catalyses the reaction octanoyl-[ACP] + L-lysyl-[protein] = N(6)-octanoyl-L-lysyl-[protein] + holo-[ACP] + H(+). It functions in the pathway protein modification; protein lipoylation via endogenous pathway; protein N(6)-(lipoyl)lysine from octanoyl-[acyl-carrier-protein]: step 1/2. Functionally, catalyzes the transfer of endogenously produced octanoic acid from octanoyl-acyl-carrier-protein onto the lipoyl domains of lipoate-dependent enzymes. Lipoyl-ACP can also act as a substrate although octanoyl-ACP is likely to be the physiological substrate. The protein is Octanoyltransferase of Chloroflexus aurantiacus (strain ATCC 29366 / DSM 635 / J-10-fl).